A 2434-amino-acid chain; its full sequence is Protein Ycf2 (2434 aa).

1693-1700 lines the ATP pocket; that stretch reads GPTETGRS.

Belongs to the Ycf2 family.

It localises to the plastid. The protein resides in the chloroplast stroma. Functionally, probable ATPase of unknown function. Its presence in a non-photosynthetic plant (Epifagus virginiana) and experiments in tobacco indicate that it has an essential function which is probably not related to photosynthesis. This is Protein Ycf2 from Cycas taitungensis (Prince sago).